The sequence spans 635 residues: MARGLPTIASLARLCQKLNRLKPLEDSTMETSLRRCLSTLDLTLLGVGGMVGSGLYVLTGAVAKEVAGPAVLLSFGVAAVASLLAALCYAEFGARVPRTGSAYLFTYVSMGELWAFLIGWNVLLEYIIGGAAVARAWSGYLDSMFSHSIRNFTETHVGSWQVPLLGHYPDFLAAGIILLASAFVSCGARVSSWLNHTFSAISLLVILFIVILGFILAQPHNWSADEGGFAPFGFSGVMAGTASCFYAFVGFDVIAASSEEAQNPRRSVPLAIAISLAIAAGAYILVSTVLTLMVPWHSLDPDSALADAFYQRGYRWAGFIVAAGSICAMNTVLLSLLFSLPRIVYAMAADGLFFQVFAHVHPRTQVPVAGTLAFGLLTAFLALLLDLESLVQFLSLGTLLAYTFVATSIIVLRFQKSSPPSSPGPASPGPLTKQQSSFSDHLQLVGTVHASVPEPGELKPALRPYLGFLDGYSPGAVVTWALGVMLASAITIGCVLVFGNSTLHLPHWGYILLLLLTSVMFLLSLLVLGAHQQQYREDLFQIPMVPLIPALSIVLNICLMLKLSYLTWVRFSIWLLMGLAVYFGYGIRHSKENQRELPGLNSTHYVVFPRGSLEETVQAMQPPSQAPAQDPGHME.

The next 3 membrane-spanning stretches (helical) occupy residues 42–62, 66–86, and 113–133; these read LTLL…TGAV, VAGP…LLAA, and LWAF…GAAV. Asn151 and Asn195 each carry an N-linked (GlcNAc...) asparagine glycan. Residues 197-217 traverse the membrane as a helical segment; it reads TFSAISLLVILFIVILGFILA. Residue Asn221 is glycosylated (N-linked (GlcNAc...) asparagine). The next 5 membrane-spanning stretches (helical) occupy residues 229 to 249, 270 to 290, 318 to 338, 365 to 385, and 391 to 411; these read FAPF…YAFV, LAIA…STVL, GFIV…SLLF, QVPV…ALLL, and VQFL…SIIV. Phosphoserine occurs at positions 422 and 427. Residues 478–498 traverse the membrane as a helical segment; it reads VTWALGVMLASAITIGCVLVF. N-linked (GlcNAc...) asparagine glycosylation is present at Asn500. A run of 3 helical transmembrane segments spans residues 508–528, 539–559, and 567–587; these read WGYI…LLVL, LFQI…NICL, and TWVR…GYGI. N-linked (GlcNAc...) asparagine glycosylation is present at Asn601.

This sequence belongs to the amino acid-polyamine-organocation (APC) superfamily. Cationic amino acid transporter (CAT) (TC 2.A.3.3) family.

Its subcellular location is the membrane. Its function is as follows. Involved in the transport of the cationic amino acids (arginine, lysine and ornithine). In Homo sapiens (Human), this protein is Cationic amino acid transporter 4 (SLC7A4).